Here is a 475-residue protein sequence, read N- to C-terminus: MNLETIIGLEVHVELKTNSKIFSASPTEFGAEPNTQTSVIDLGYPGVLPTLNKEAVNFAMKAAMALNCEIATETKFDRKNYFYPDNPKAYQISQFDKPIGENGWIEIEVDGKKKRIGITRLHLEEDAGKSTHTADGSLVDYNRQGMPLIEIVSEPDMRTPEEAYAYLEKLKSIIQYTGVSDCKMEEGSLRCDANISLRPVGQEKFGTKAELKNLNSFTYVQKGLEHEQVRQEKELLSGGIIQQETRRYDEATKKTILMRVKEGSDDYRYFPEPDLVELYIDDEWKEAVRASIPELPDARKARYVAEIGLPAYDAHVLTLTKEMSDFFEATVADGADAKLTSNWLMGEVLAYLNKQQKELKDVALTPAGLSKMVQLIEKGTISSKIAKKVFNELIEKGGDPEEIVKAKGLVQISDEGTLRKVVTEILDNNGQSIEDFKNGKDRAIGFLVGQIMKATKGQANPPLVNKILLEEINKR.

Belongs to the GatB/GatE family. GatB subfamily. As to quaternary structure, heterotrimer of A, B and C subunits.

It catalyses the reaction L-glutamyl-tRNA(Gln) + L-glutamine + ATP + H2O = L-glutaminyl-tRNA(Gln) + L-glutamate + ADP + phosphate + H(+). The catalysed reaction is L-aspartyl-tRNA(Asn) + L-glutamine + ATP + H2O = L-asparaginyl-tRNA(Asn) + L-glutamate + ADP + phosphate + 2 H(+). Its function is as follows. Allows the formation of correctly charged Asn-tRNA(Asn) or Gln-tRNA(Gln) through the transamidation of misacylated Asp-tRNA(Asn) or Glu-tRNA(Gln) in organisms which lack either or both of asparaginyl-tRNA or glutaminyl-tRNA synthetases. The reaction takes place in the presence of glutamine and ATP through an activated phospho-Asp-tRNA(Asn) or phospho-Glu-tRNA(Gln). This is Aspartyl/glutamyl-tRNA(Asn/Gln) amidotransferase subunit B from Bacillus cereus (strain G9842).